The sequence spans 324 residues: Beta-ketoacyl-[acyl-carrier-protein] synthase III (324 aa).

Residues C116 and H251 contribute to the active site. The ACP-binding stretch occupies residues Q252–R256. N281 is a catalytic residue.

The protein belongs to the thiolase-like superfamily. FabH family. In terms of assembly, homodimer.

It localises to the cytoplasm. It catalyses the reaction malonyl-[ACP] + acetyl-CoA + H(+) = 3-oxobutanoyl-[ACP] + CO2 + CoA. The protein operates within lipid metabolism; fatty acid biosynthesis. Catalyzes the condensation reaction of fatty acid synthesis by the addition to an acyl acceptor of two carbons from malonyl-ACP. Catalyzes the first condensation reaction which initiates fatty acid synthesis and may therefore play a role in governing the total rate of fatty acid production. Possesses both acetoacetyl-ACP synthase and acetyl transacylase activities. Its substrate specificity determines the biosynthesis of branched-chain and/or straight-chain of fatty acids. This is Beta-ketoacyl-[acyl-carrier-protein] synthase III from Xylella fastidiosa (strain Temecula1 / ATCC 700964).